We begin with the raw amino-acid sequence, 349 residues long: 1-acylglycerol-3-phosphate O-acyltransferase ABHD5 (349 aa).

Position 2 is an N-acetylalanine (A2). Residues 77-185 enclose the AB hydrolase-1 domain; it reads PLVLLHGFGG…VEPWGFPERP (109 aa). The short motif at 327-332 is the HXXXXD motif element; that stretch reads HYVYAD.

Belongs to the peptidase S33 family. ABHD4/ABHD5 subfamily. Interacts with ADRP, PLIN and PNPLA2. Interacts with PLIN5; promotes interaction with PNPLA2.

It is found in the cytoplasm. The protein resides in the lipid droplet. The enzyme catalyses a 1-acyl-sn-glycero-3-phosphate + an acyl-CoA = a 1,2-diacyl-sn-glycero-3-phosphate + CoA. The catalysed reaction is 1-(9Z-octadecenoyl)-sn-glycero-3-phosphate + (9Z)-octadecenoyl-CoA = 1,2-di-(9Z-octadecenoyl)-sn-glycero-3-phosphate + CoA. It carries out the reaction 1-(9Z-octadecenoyl)-sn-glycero-3-phosphate + hexadecanoyl-CoA = 1-(9Z)-octadecenoyl-2-hexadecanoyl-sn-glycero-3-phosphate + CoA. It catalyses the reaction 1-(9Z-octadecenoyl)-sn-glycero-3-phosphate + octadecanoyl-CoA = 1-(9Z-octadecenoyl)-2-octadecanoyl-sn-glycero-3-phosphate + CoA. The enzyme catalyses 1-(9Z-octadecenoyl)-sn-glycero-3-phosphate + (5Z,8Z,11Z,14Z)-eicosatetraenoyl-CoA = 1-(9Z)-octadecenoyl-2-(5Z,8Z,11Z,14Z)-eicosatetraenoyl-sn-glycero-3-phosphate + CoA. The catalysed reaction is eicosanoyl-CoA + 1-(9Z-octadecenoyl)-sn-glycero-3-phosphate = 1-(9Z)-octadecenoyl-2-eicosanoyl-sn-glycero-3-phosphate + CoA. It carries out the reaction 1-hexadecanoyl-sn-glycero-3-phosphate + (9Z)-octadecenoyl-CoA = 1-hexadecanoyl-2-(9Z-octadecenoyl)-sn-glycero-3-phosphate + CoA. It catalyses the reaction 1-octadecanoyl-sn-glycero-3-phosphate + (9Z)-octadecenoyl-CoA = 1-octadecanoyl-2-(9Z-octadecenoyl)-sn-glycero-3-phosphate + CoA. The enzyme catalyses 1-(5Z,8Z,11Z,14Z-eicosatetraenoyl)-sn-glycero-3-phosphate + (9Z)-octadecenoyl-CoA = 1-(5Z,8Z,11Z,14Z)-eicosatetraenoyl-2-(9Z)-octadecenoyl-sn-glycero-3-phosphate + CoA. With respect to regulation, acyltransferase activity is inhibited by detergents such as Triton X-100 and 3-[(3-cholamidopropyl)dimethylammonio]-1-propanesulfonate (CHAPS). Acyltransferase activity is inhibited by the presence of magnesium and calcium. In terms of biological role, coenzyme A-dependent lysophosphatidic acid acyltransferase that catalyzes the transfer of an acyl group on a lysophosphatidic acid. Functions preferentially with 1-oleoyl-lysophosphatidic acid followed by 1-palmitoyl-lysophosphatidic acid, 1-stearoyl-lysophosphatidic acid and 1-arachidonoyl-lysophosphatidic acid as lipid acceptor. Functions preferentially with arachidonoyl-CoA followed by oleoyl-CoA as acyl group donors. Functions in phosphatidic acid biosynthesis. May regulate the cellular storage of triacylglycerol through activation of the phospholipase PNPLA2. Involved in keratinocyte differentiation. Regulates lipid droplet fusion. The chain is 1-acylglycerol-3-phosphate O-acyltransferase ABHD5 from Sus scrofa (Pig).